A 38-amino-acid polypeptide reads, in one-letter code: DNA binding protein VP8 (38 aa).

The segment covering 1–16 has biased composition (basic residues); the sequence is MKRKPMSRKASQKTFK. A disordered region spans residues 1–38; the sequence is MKRKPMSRKASQKTFKKNTGVQRMNHLNPRAMRGGIRL.

This sequence belongs to the microviridae J protein family.

It is found in the virion. The protein localises to the host cytoplasm. In terms of biological role, mediates ssDNA packaging into virion, it locates to the internal surface of the capsid, thereby displacing the internal scaffolding protein VP3 during virion formation. Additionally, protein VP8 plays a role in viral attachment to the host cell. This is DNA binding protein VP8 from Bdellovibrio phage phiMH2K (Bacteriophage phiMH2K).